Here is a 182-residue protein sequence, read N- to C-terminus: Probable inosine/xanthosine triphosphatase (182 aa).

Position 65 (Glu-65) interacts with Mg(2+). 65–66 serves as a coordination point for substrate; the sequence is EA.

The protein belongs to the YjjX NTPase family. In terms of assembly, homodimer. Requires Mg(2+) as cofactor. The cofactor is Mn(2+).

It carries out the reaction XTP + H2O = XDP + phosphate + H(+). It catalyses the reaction ITP + H2O = IDP + phosphate + H(+). Phosphatase that hydrolyzes non-canonical purine nucleotides such as XTP and ITP to their respective diphosphate derivatives. Probably excludes non-canonical purines from DNA/RNA precursor pool, thus preventing their incorporation into DNA/RNA and avoiding chromosomal lesions. This is Probable inosine/xanthosine triphosphatase from Pyrobaculum neutrophilum (strain DSM 2338 / JCM 9278 / NBRC 100436 / V24Sta) (Thermoproteus neutrophilus).